A 315-amino-acid chain; its full sequence is MKNNFSHTPVLLNETIQNLDIKNDGIYIDATFGYGGHSKEILKHLGKNGKLYSIDQDPYAIKIANKLKNDTRFNIIHGKFSNILKYSNKNKIRGKVNGILLDLGMSSMQINNPNRGFSFISDGPLDMRMNPNTGIPAYMWLKKTNLTTLYHVLKKYGEEPFSKKIAYNIIAYNKKKTITRTLELSKIITNSIPIKKYRKHPARRVFQAIRIYINHEIYELQQALEHVLNILIPGGKLLILSFHSLEDRTVKKFMIKYSKPPFVPPGLAITETQLKSLANKQLKIITKIFPSTIEIRKNPRAHSAILRVAQKNNNE.

Residues 35–37 (GGH), aspartate 55, phenylalanine 80, aspartate 102, and glutamine 109 contribute to the S-adenosyl-L-methionine site.

This sequence belongs to the methyltransferase superfamily. RsmH family.

It localises to the cytoplasm. It carries out the reaction cytidine(1402) in 16S rRNA + S-adenosyl-L-methionine = N(4)-methylcytidine(1402) in 16S rRNA + S-adenosyl-L-homocysteine + H(+). Functionally, specifically methylates the N4 position of cytidine in position 1402 (C1402) of 16S rRNA. The polypeptide is Ribosomal RNA small subunit methyltransferase H (Buchnera aphidicola subsp. Baizongia pistaciae (strain Bp)).